The primary structure comprises 442 residues: Microfibrillar-associated protein 1 (442 aa).

2 disordered regions span residues 1–34 and 113–203; these read MSAP…YGEG and EVVS…PRLK. Composition is skewed to acidic residues over residues 134 to 148 and 181 to 198; these read DTSE…DEEI and ESEL…EDEM.

This sequence belongs to the MFAP1 family. Component of the spliceosome B complex. Interacts with PRPF38A (via N-terminal interaction domain). Widely expressed.

It is found in the nucleus. Involved in pre-mRNA splicing as a component of the spliceosome. The sequence is that of Microfibrillar-associated protein 1 from Gallus gallus (Chicken).